We begin with the raw amino-acid sequence, 355 residues long: SH3 domain-containing protein Dlish (355 aa).

3 SH3 domains span residues serine 57–threonine 117, glutamate 183–serine 243, and tyrosine 287–methionine 352.

In terms of assembly, interacts with dachs (via C-terminus); the interaction is direct. Interacts (via N-terminus including SH3 domain 1) with palmitoyltransferase app; this leads to palmitoylation of Dlish by app. Also interacts with dco, ft, ft-regulated E3 ubiquitin ligase Fbxl7, F-box protein slmb and SCF E3 ubiquitin-protein ligase complex component Cul1. Palmitoylated by app.

The protein localises to the cytoplasm. It is found in the cell cortex. Its function is as follows. Required for the apical cell cortex localization, total cellular level and full activity of dachs. In Drosophila melanogaster (Fruit fly), this protein is SH3 domain-containing protein Dlish.